Here is a 779-residue protein sequence, read N- to C-terminus: Acyl-homoserine lactone acylase PvdQ (779 aa).

An N-terminal signal peptide occupies residues 1 to 25 (MIISRPLCSFVFAGLSFAVILPAQA). Residues 202 to 223 (AQQAQALQLAAARNQRFALERG) constitute a propeptide, spacer peptide. The active-site Nucleophile is serine 224. Positions 731-746 (ESSNPQSAHSSDQTEA) are enriched in polar residues. Residues 731–750 (ESSNPQSAHSSDQTEAFSKK) are disordered.

It belongs to the peptidase S45 family. In terms of assembly, heterodimer of an alpha subunit and a beta subunit processed from the same precursor.

It is found in the periplasm. It catalyses the reaction an N-acyl-L-homoserine lactone + H2O = L-homoserine lactone + a carboxylate. Functionally, catalyzes the deacylation of acyl-homoserine lactone (AHL or acyl-HSL), releasing homoserine lactone (HSL) and the corresponding fatty acid. Possesses a specificity for the degradation of long-chain acyl-HSLs (side chains of 11 to 14 carbons in length). This Pseudomonas syringae pv. syringae (strain B728a) protein is Acyl-homoserine lactone acylase PvdQ (pvdQ).